Reading from the N-terminus, the 138-residue chain is Large ribosomal subunit protein uL16 (138 aa).

Belongs to the universal ribosomal protein uL16 family. In terms of assembly, part of the 50S ribosomal subunit.

Binds 23S rRNA and is also seen to make contacts with the A and possibly P site tRNAs. This Mycoplasmoides gallisepticum (strain R(low / passage 15 / clone 2)) (Mycoplasma gallisepticum) protein is Large ribosomal subunit protein uL16.